A 149-amino-acid polypeptide reads, in one-letter code: Arginine repressor (149 aa).

The protein belongs to the ArgR family.

The protein resides in the cytoplasm. The protein operates within amino-acid biosynthesis; L-arginine biosynthesis [regulation]. In terms of biological role, regulates arginine biosynthesis genes. The polypeptide is Arginine repressor (Chlorobaculum tepidum (strain ATCC 49652 / DSM 12025 / NBRC 103806 / TLS) (Chlorobium tepidum)).